Here is a 58-residue protein sequence, read N- to C-terminus: MIYRKWSLLSSTILIWGGAATAGLAGVFLFNAKEKFQKYLSGEGQRLRQQDRAAMGKN.

Component of complex II composed of eight subunits in plants: four classical SDH subunits SDH1, SDH2, SDH3 and SDH4 (a flavoprotein (FP), an iron-sulfur protein (IP), and a cytochrome b composed of a large and a small subunit.), as well as four subunits unknown in mitochondria from bacteria and heterotrophic eukaryotes.

It localises to the mitochondrion inner membrane. It participates in carbohydrate metabolism; tricarboxylic acid cycle. This chain is Succinate dehydrogenase subunit 8B, mitochondrial, found in Oryza sativa subsp. japonica (Rice).